The sequence spans 620 residues: Chaperone protein HtpG (620 aa).

Residues 1 to 334 are a; substrate-binding; the sequence is MTTTDTAPQT…SEDLPLNLSR (334 aa). The interval 335–548 is b; the sequence is EMLQNNPQLV…GQGPDRALER (214 aa). The segment at 549-620 is c; the sequence is MLAQQNRGGA…RINRLVLRAL (72 aa).

This sequence belongs to the heat shock protein 90 family. Homodimer.

It is found in the cytoplasm. Functionally, molecular chaperone. Has ATPase activity. The protein is Chaperone protein HtpG of Rhodopseudomonas palustris (strain BisA53).